The following is a 488-amino-acid chain: N-succinylglutamate 5-semialdehyde dehydrogenase 2 (488 aa).

221–226 (GSSNTG) is a binding site for NAD(+). Residues glutamate 244 and cysteine 278 contribute to the active site.

It belongs to the aldehyde dehydrogenase family. AstD subfamily.

It catalyses the reaction N-succinyl-L-glutamate 5-semialdehyde + NAD(+) + H2O = N-succinyl-L-glutamate + NADH + 2 H(+). Its pathway is amino-acid degradation; L-arginine degradation via AST pathway; L-glutamate and succinate from L-arginine: step 4/5. In terms of biological role, catalyzes the NAD-dependent reduction of succinylglutamate semialdehyde into succinylglutamate. This chain is N-succinylglutamate 5-semialdehyde dehydrogenase 2, found in Pseudoalteromonas translucida (strain TAC 125).